The following is a 372-amino-acid chain: Envelope phospholipase OPG057 (372 aa).

Positions 153-156 (YPPL) match the YPPL motif. 2 S-palmitoyl cysteine; by host lipidation sites follow: Cys185 and Cys186. One can recognise a PLD phosphodiesterase domain in the interval 307-334 (FTIQNNTKLLIVDDEYVHITSANFDGTH).

The protein belongs to the orthopoxvirus OPG057 family. As to quaternary structure, interacts with protein OPG190. Post-translationally, palmitoylated. Attachment of the palmitate moiety is essential for correct intracellular targeting and protein function.

It localises to the virion membrane. The protein resides in the host Golgi apparatus. Its subcellular location is the host trans-Golgi network. The protein localises to the host endoplasmic reticulum membrane. The enzyme catalyses a 1,2-diacyl-sn-glycero-3-phosphocholine + H2O = a 1,2-diacyl-sn-glycero-3-phosphate + choline + H(+). In terms of biological role, major envelope protein that plays a role in the biogenesis of the viral double membrane and in egress of virus from the host cell. Produces the wrapped form of virus that is required for cell-to-cell spread. Acts as a lipase with broad specificity including phospholipase C, phospholipase A, and triacylglycerol lipase activities. This Variola virus (isolate Human/India/Ind3/1967) (VARV) protein is Envelope phospholipase OPG057 (OPG057).